The sequence spans 179 residues: Large ribosomal subunit protein uL5 (179 aa).

The protein belongs to the universal ribosomal protein uL5 family. In terms of assembly, part of the 50S ribosomal subunit; part of the 5S rRNA/L5/L18/L25 subcomplex. Contacts the 5S rRNA and the P site tRNA. Forms a bridge to the 30S subunit in the 70S ribosome.

In terms of biological role, this is one of the proteins that bind and probably mediate the attachment of the 5S RNA into the large ribosomal subunit, where it forms part of the central protuberance. In the 70S ribosome it contacts protein S13 of the 30S subunit (bridge B1b), connecting the 2 subunits; this bridge is implicated in subunit movement. Contacts the P site tRNA; the 5S rRNA and some of its associated proteins might help stabilize positioning of ribosome-bound tRNAs. In Pseudomonas syringae pv. tomato (strain ATCC BAA-871 / DC3000), this protein is Large ribosomal subunit protein uL5.